Consider the following 66-residue polypeptide: Surface composition regulator (66 aa).

It belongs to the GlgS family.

Its function is as follows. Major determinant of cell surface composition. Negatively regulates motility, adhesion and synthesis of biofilm exopolysaccharides. This chain is Surface composition regulator, found in Escherichia coli O139:H28 (strain E24377A / ETEC).